The primary structure comprises 424 residues: UDP-N-acetylglucosamine 1-carboxyvinyltransferase (424 aa).

22–23 (KN) is a phosphoenolpyruvate binding site. A UDP-N-acetyl-alpha-D-glucosamine-binding site is contributed by R96. C120 serves as the catalytic Proton donor. The residue at position 120 (C120) is a 2-(S-cysteinyl)pyruvic acid O-phosphothioketal. UDP-N-acetyl-alpha-D-glucosamine-binding positions include 125–129 (RPVDQ), D312, and I334.

Belongs to the EPSP synthase family. MurA subfamily.

Its subcellular location is the cytoplasm. The enzyme catalyses phosphoenolpyruvate + UDP-N-acetyl-alpha-D-glucosamine = UDP-N-acetyl-3-O-(1-carboxyvinyl)-alpha-D-glucosamine + phosphate. Its pathway is cell wall biogenesis; peptidoglycan biosynthesis. In terms of biological role, cell wall formation. Adds enolpyruvyl to UDP-N-acetylglucosamine. This Polynucleobacter asymbioticus (strain DSM 18221 / CIP 109841 / QLW-P1DMWA-1) (Polynucleobacter necessarius subsp. asymbioticus) protein is UDP-N-acetylglucosamine 1-carboxyvinyltransferase.